The chain runs to 813 residues: Leucine--tRNA ligase (813 aa).

Residues 42–52 carry the 'HIGH' region motif; the sequence is PYTSGNLHIGH. The 'KMSKS' region signature appears at 580 to 584; the sequence is KMSKS. Lys583 contacts ATP.

This sequence belongs to the class-I aminoacyl-tRNA synthetase family.

It is found in the cytoplasm. The catalysed reaction is tRNA(Leu) + L-leucine + ATP = L-leucyl-tRNA(Leu) + AMP + diphosphate. This Dehalococcoides mccartyi (strain ATCC BAA-2266 / KCTC 15142 / 195) (Dehalococcoides ethenogenes (strain 195)) protein is Leucine--tRNA ligase.